The primary structure comprises 215 residues: UPF0502 protein YceH (215 aa).

The protein belongs to the UPF0502 family.

This chain is UPF0502 protein YceH, found in Salmonella schwarzengrund (strain CVM19633).